The following is a 222-amino-acid chain: Superoxide dismutase [Mn], mitochondrial (222 aa).

The transit peptide at 1-24 (MLSRAVCGTGRQLAPALGYLGSRQ) directs the protein to the mitochondrion. His-50 serves as a coordination point for Mn(2+). Position 58 is a 3'-nitrotyrosine (Tyr-58). N6-acetyllysine; alternate occurs at positions 68 and 75. Lys-68 and Lys-75 each carry N6-succinyllysine; alternate. His-98 provides a ligand contact to Mn(2+). Lys-114 bears the N6-acetyllysine mark. Residues Lys-122 and Lys-130 each carry the N6-acetyllysine; alternate modification. 2 positions are modified to N6-succinyllysine; alternate: Lys-122 and Lys-130. Residues Asp-183 and His-187 each coordinate Mn(2+). At Lys-202 the chain carries N6-acetyllysine.

This sequence belongs to the iron/manganese superoxide dismutase family. Homotetramer. The cofactor is Mn(2+). Nitrated under oxidative stress. Nitration coupled with oxidation inhibits the catalytic activity. Post-translationally, acetylation at Lys-122 decreases enzymatic activity. Deacetylated by SIRT3 upon exposure to ionizing radiations or after long fasting. In terms of processing, polyubiquitinated; leading to proteasomal degradation. Deubiquitinated by USP36 which increases protein stability.

The protein resides in the mitochondrion matrix. It carries out the reaction 2 superoxide + 2 H(+) = H2O2 + O2. In terms of biological role, destroys superoxide anion radicals which are normally produced within the cells and which are toxic to biological systems. The sequence is that of Superoxide dismutase [Mn], mitochondrial (SOD2) from Macaca fascicularis (Crab-eating macaque).